Consider the following 336-residue polypeptide: HTH-type transcriptional repressor PurR (336 aa).

In terms of domain architecture, HTH lacI-type spans 2 to 56 (ATIKDVAKLAGVSTTTVSHVINKTRFVAEDTSKAVWDAIQQLNYSPSAVARSLKV). A DNA-binding region (H-T-H motif) is located at residues 4 to 23 (IKDVAKLAGVSTTTVSHVIN). Residues 48–56 (SAVARSLKV) mediate DNA binding. Residues tyrosine 73, lysine 188, phenylalanine 219, and aspartate 273 each contribute to the hypoxanthine site.

As to quaternary structure, homodimer.

Its pathway is purine metabolism; purine nucleotide biosynthesis [regulation]. In terms of biological role, is the main repressor of the genes involved in the de novo synthesis of purine nucleotides, regulating purB, purC, purEK, purF, purHD, purL, purMN and guaBA expression. PurR is allosterically activated to bind its cognate DNA by binding the purine corepressors, hypoxanthine or guanine, thereby effecting transcription repression. This Actinobacillus pleuropneumoniae serotype 5b (strain L20) protein is HTH-type transcriptional repressor PurR.